Consider the following 483-residue polypeptide: Phosphoglucosamine mutase (483 aa).

Ser-131 serves as the catalytic Phosphoserine intermediate. Mg(2+) is bound by residues Ser-131, Asp-272, Asp-274, and Asp-276. A Phosphoserine modification is found at Ser-131.

It belongs to the phosphohexose mutase family. Mg(2+) is required as a cofactor. Activated by phosphorylation.

It carries out the reaction alpha-D-glucosamine 1-phosphate = D-glucosamine 6-phosphate. Its function is as follows. Catalyzes the conversion of glucosamine-6-phosphate to glucosamine-1-phosphate. This chain is Phosphoglucosamine mutase, found in Magnetococcus marinus (strain ATCC BAA-1437 / JCM 17883 / MC-1).